The primary structure comprises 97 residues: Sperm-associated acrosin inhibitor (97 aa).

Residues 1–26 (MAFFSSRVRALFILVLVLPLCSETGF) form the signal peptide. Residues 32–90 (TRKEPDCDVYRSHLFFCTREMDPICGTNGKSYANPCIFCSEKLGRNEKFDFGHWGHCRE) form the Kazal-like domain. Disulfide bonds link Cys38-Cys70, Cys48-Cys67, and Cys56-Cys88.

As to expression, seminal plasma.

The protein resides in the secreted. Inhibits acrosin. The sequence is that of Sperm-associated acrosin inhibitor from Sus scrofa (Pig).